A 257-amino-acid chain; its full sequence is Imidazole glycerol phosphate synthase subunit HisF (257 aa).

Residues Asp-11 and Asp-130 contribute to the active site.

This sequence belongs to the HisA/HisF family. In terms of assembly, heterodimer of HisH and HisF.

It is found in the cytoplasm. It carries out the reaction 5-[(5-phospho-1-deoxy-D-ribulos-1-ylimino)methylamino]-1-(5-phospho-beta-D-ribosyl)imidazole-4-carboxamide + L-glutamine = D-erythro-1-(imidazol-4-yl)glycerol 3-phosphate + 5-amino-1-(5-phospho-beta-D-ribosyl)imidazole-4-carboxamide + L-glutamate + H(+). Its pathway is amino-acid biosynthesis; L-histidine biosynthesis; L-histidine from 5-phospho-alpha-D-ribose 1-diphosphate: step 5/9. Its function is as follows. IGPS catalyzes the conversion of PRFAR and glutamine to IGP, AICAR and glutamate. The HisF subunit catalyzes the cyclization activity that produces IGP and AICAR from PRFAR using the ammonia provided by the HisH subunit. This Pseudoalteromonas atlantica (strain T6c / ATCC BAA-1087) protein is Imidazole glycerol phosphate synthase subunit HisF.